The following is a 414-amino-acid chain: Serine hydroxymethyltransferase (414 aa).

(6S)-5,6,7,8-tetrahydrofolate contacts are provided by residues Leu-121 and 125–127 (GHL). Residue Lys-229 is modified to N6-(pyridoxal phosphate)lysine.

Belongs to the SHMT family. In terms of assembly, homodimer. Pyridoxal 5'-phosphate serves as cofactor.

The protein localises to the cytoplasm. It catalyses the reaction (6R)-5,10-methylene-5,6,7,8-tetrahydrofolate + glycine + H2O = (6S)-5,6,7,8-tetrahydrofolate + L-serine. It participates in one-carbon metabolism; tetrahydrofolate interconversion. Its pathway is amino-acid biosynthesis; glycine biosynthesis; glycine from L-serine: step 1/1. In terms of biological role, catalyzes the reversible interconversion of serine and glycine with tetrahydrofolate (THF) serving as the one-carbon carrier. This reaction serves as the major source of one-carbon groups required for the biosynthesis of purines, thymidylate, methionine, and other important biomolecules. Also exhibits THF-independent aldolase activity toward beta-hydroxyamino acids, producing glycine and aldehydes, via a retro-aldol mechanism. The chain is Serine hydroxymethyltransferase from Janthinobacterium sp. (strain Marseille) (Minibacterium massiliensis).